Here is a 162-residue protein sequence, read N- to C-terminus: Caveolin-2 (162 aa).

The Cytoplasmic segment spans residues 1–86 (MGLETEKADV…FEISKYVMYK (86 aa)). Residue Y19 is modified to Phosphotyrosine; by SRC. A phosphoserine mark is found at S20 and S23. Y27 is modified (phosphotyrosine; by SRC). The residue at position 36 (S36) is a Phosphoserine. An intramembrane region (helical) is located at residues 87–107 (FLTVFLAIPLAFLAGILFATL). The Cytoplasmic portion of the chain corresponds to 108 to 162 (SCLHIWIIMPFVKTCLMVLPSVQTIWKSVTDAIIAPLCTSIGRSFSSVSLQLSQD).

It belongs to the caveolin family. As to quaternary structure, monomer or homodimer. Interacts with CAV1; the interaction forms a stable heterooligomeric complex that is required for targeting to lipid rafts and for caveolae formation. Tyrosine phosphorylated forms do not form heterooligomers with the Tyr-19-phosphorylated form existing as a monomer or dimer, and the Tyr-27-form as a monomer only. Interacts (tyrosine phosphorylated form) with the SH2 domain-containing proteins, RASA1, NCK1 and SRC. Interacts (tyrosine phosphorylated form) with INSR, the interaction (Tyr-27-phosphorylated form) is increased on insulin stimulation. Interacts (Tyr-19 phosphorylated form) with MAPK1 (phosphorylated form); the interaction, promoted by insulin, leads to nuclear location and MAPK1 activation. Interacts with STAT3; the interaction is increased on insulin-induced tyrosine phosphorylation leading to STAT activation. Phosphorylated on serine and tyrosine residues. CAV1 promotes phosphorylation on Ser-23 which then targets the complex to the plasma membrane, lipid rafts and caveolae. Phosphorylation on Ser-36 appears to modulate mitosis in endothelial cells. Phosphorylation on both Tyr-19 and Tyr-27 is required for insulin-induced 'Ser-727' phosphorylation of STAT3 and its activation. Phosphorylation on Tyr-19 is required for insulin-induced phosphorylation of MAPK1 and DNA binding of STAT3. Tyrosine phosphorylation is induced by both EGF and insulin (By. similarity).

It localises to the nucleus. The protein resides in the cytoplasm. Its subcellular location is the golgi apparatus membrane. The protein localises to the cell membrane. It is found in the membrane. It localises to the caveola. Its function is as follows. May act as a scaffolding protein within caveolar membranes. Interacts directly with G-protein alpha subunits and can functionally regulate their activity. Acts as an accessory protein in conjunction with CAV1 in targeting to lipid rafts and driving caveolae formation. The Ser-36 phosphorylated form has a role in modulating mitosis in endothelial cells. Positive regulator of cellular mitogenesis of the MAPK signaling pathway. Required for the insulin-stimulated nuclear translocation and activation of MAPK1 and STAT3, and the subsequent regulation of cell cycle progression. This Callithrix jacchus (White-tufted-ear marmoset) protein is Caveolin-2 (CAV2).